The sequence spans 78 residues: Acyl carrier protein (78 aa).

Residues 2–77 (SSIEERVKKI…LAINYINENL (76 aa)) form the Carrier domain. Position 37 is an O-(pantetheine 4'-phosphoryl)serine (S37).

Belongs to the acyl carrier protein (ACP) family. Post-translationally, 4'-phosphopantetheine is transferred from CoA to a specific serine of apo-ACP by AcpS. This modification is essential for activity because fatty acids are bound in thioester linkage to the sulfhydryl of the prosthetic group.

The protein resides in the cytoplasm. The protein operates within lipid metabolism; fatty acid biosynthesis. Its function is as follows. Carrier of the growing fatty acid chain in fatty acid biosynthesis. The chain is Acyl carrier protein from Saccharophagus degradans (strain 2-40 / ATCC 43961 / DSM 17024).